A 207-amino-acid chain; its full sequence is Large ribosomal subunit protein bL25 (207 aa).

The protein belongs to the bacterial ribosomal protein bL25 family. CTC subfamily. Part of the 50S ribosomal subunit; part of the 5S rRNA/L5/L18/L25 subcomplex. Contacts the 5S rRNA. Binds to the 5S rRNA independently of L5 and L18.

Functionally, this is one of the proteins that binds to the 5S RNA in the ribosome where it forms part of the central protuberance. This Paraburkholderia xenovorans (strain LB400) protein is Large ribosomal subunit protein bL25.